The primary structure comprises 100 residues: NADH-quinone oxidoreductase subunit K (100 aa).

The next 3 membrane-spanning stretches (helical) occupy residues 3–23 (LNAY…GIFL), 29–49 (ISIM…FVAF), and 60–80 (IFTF…LAIL).

The protein belongs to the complex I subunit 4L family. NDH-1 is composed of 14 different subunits. Subunits NuoA, H, J, K, L, M, N constitute the membrane sector of the complex.

It is found in the cell inner membrane. The catalysed reaction is a quinone + NADH + 5 H(+)(in) = a quinol + NAD(+) + 4 H(+)(out). NDH-1 shuttles electrons from NADH, via FMN and iron-sulfur (Fe-S) centers, to quinones in the respiratory chain. The immediate electron acceptor for the enzyme in this species is believed to be ubiquinone. Couples the redox reaction to proton translocation (for every two electrons transferred, four hydrogen ions are translocated across the cytoplasmic membrane), and thus conserves the redox energy in a proton gradient. This chain is NADH-quinone oxidoreductase subunit K, found in Magnetococcus marinus (strain ATCC BAA-1437 / JCM 17883 / MC-1).